Here is a 420-residue protein sequence, read N- to C-terminus: Glutamyl-tRNA reductase (420 aa).

Residues 49 to 52, Ser109, 114 to 116, and Gln120 contribute to the substrate site; these read TCNR and EPQ. Catalysis depends on Cys50, which acts as the Nucleophile. 189–194 serves as a coordination point for NADP(+); it reads GAGETI.

It belongs to the glutamyl-tRNA reductase family. In terms of assembly, homodimer.

The catalysed reaction is (S)-4-amino-5-oxopentanoate + tRNA(Glu) + NADP(+) = L-glutamyl-tRNA(Glu) + NADPH + H(+). The protein operates within porphyrin-containing compound metabolism; protoporphyrin-IX biosynthesis; 5-aminolevulinate from L-glutamyl-tRNA(Glu): step 1/2. Functionally, catalyzes the NADPH-dependent reduction of glutamyl-tRNA(Glu) to glutamate 1-semialdehyde (GSA). In Serratia proteamaculans (strain 568), this protein is Glutamyl-tRNA reductase.